The chain runs to 106 residues: Large ribosomal subunit protein eL30 (106 aa).

The protein belongs to the eukaryotic ribosomal protein eL30 family.

The protein is Large ribosomal subunit protein eL30 of Methanococcus maripaludis (strain C7 / ATCC BAA-1331).